A 166-amino-acid polypeptide reads, in one-letter code: uncharacterized protein (166 aa).

The protein to B.subtilis YpjQ.

This is an uncharacterized protein from Bacillus subtilis (strain 168).